The primary structure comprises 159 residues: SsrA-binding protein (159 aa).

This sequence belongs to the SmpB family.

It is found in the cytoplasm. Its function is as follows. Required for rescue of stalled ribosomes mediated by trans-translation. Binds to transfer-messenger RNA (tmRNA), required for stable association of tmRNA with ribosomes. tmRNA and SmpB together mimic tRNA shape, replacing the anticodon stem-loop with SmpB. tmRNA is encoded by the ssrA gene; the 2 termini fold to resemble tRNA(Ala) and it encodes a 'tag peptide', a short internal open reading frame. During trans-translation Ala-aminoacylated tmRNA acts like a tRNA, entering the A-site of stalled ribosomes, displacing the stalled mRNA. The ribosome then switches to translate the ORF on the tmRNA; the nascent peptide is terminated with the 'tag peptide' encoded by the tmRNA and targeted for degradation. The ribosome is freed to recommence translation, which seems to be the essential function of trans-translation. This chain is SsrA-binding protein, found in Coxiella burnetii (strain CbuK_Q154) (Coxiella burnetii (strain Q154)).